A 561-amino-acid chain; its full sequence is Potassium-transporting ATPase potassium-binding subunit (561 aa).

A run of 12 helical transmembrane segments spans residues 1–21 (MMAS…LLAR), 62–82 (YLLA…LILM), 132–152 (GLTV…FALM), 173–193 (ITLY…VSQG), 253–273 (FVQM…FGDV), 283–303 (LLWS…WAEV), 327–347 (FGIL…CGAV), 356–376 (ALGG…FGGV), 379–399 (GLYG…LMIG), 416–436 (MTAL…ALAM), 483–503 (MLLA…VLAI), and 526–546 (LFIA…FIPA).

It belongs to the KdpA family. The system is composed of three essential subunits: KdpA, KdpB and KdpC.

It is found in the cell inner membrane. In terms of biological role, part of the high-affinity ATP-driven potassium transport (or Kdp) system, which catalyzes the hydrolysis of ATP coupled with the electrogenic transport of potassium into the cytoplasm. This subunit binds the periplasmic potassium ions and delivers the ions to the membrane domain of KdpB through an intramembrane tunnel. This Erwinia tasmaniensis (strain DSM 17950 / CFBP 7177 / CIP 109463 / NCPPB 4357 / Et1/99) protein is Potassium-transporting ATPase potassium-binding subunit.